Consider the following 28-residue polypeptide: Trypsin inhibitor A (28 aa).

Intrachain disulfides connect C3–C20, C10–C22, and C16–C27.

This sequence belongs to the protease inhibitor I7 (squash-type serine protease inhibitor) family.

It localises to the secreted. Inhibits trypsin. In Momordica charantia (Bitter gourd), this protein is Trypsin inhibitor A.